Consider the following 249-residue polypeptide: 23S rRNA (guanosine-2'-O-)-methyltransferase RlmB (249 aa).

Residues Gly200, Ile220, and Leu229 each contribute to the S-adenosyl-L-methionine site.

The protein belongs to the class IV-like SAM-binding methyltransferase superfamily. RNA methyltransferase TrmH family. RlmB subfamily.

It localises to the cytoplasm. It catalyses the reaction guanosine(2251) in 23S rRNA + S-adenosyl-L-methionine = 2'-O-methylguanosine(2251) in 23S rRNA + S-adenosyl-L-homocysteine + H(+). Specifically methylates the ribose of guanosine 2251 in 23S rRNA. This Xanthomonas campestris pv. campestris (strain ATCC 33913 / DSM 3586 / NCPPB 528 / LMG 568 / P 25) protein is 23S rRNA (guanosine-2'-O-)-methyltransferase RlmB.